The following is a 366-amino-acid chain: GTP cyclohydrolase 1 type 2 homolog (366 aa).

Zn(2+) contacts are provided by His-64, His-65, Asp-102, His-326, and Glu-329.

Belongs to the GTP cyclohydrolase I type 2/NIF3 family. In terms of assembly, toroid-shaped homohexamer that has a central cavity of about 38 Angstroms diameter.

The polypeptide is GTP cyclohydrolase 1 type 2 homolog (Staphylococcus aureus (strain Mu50 / ATCC 700699)).